The chain runs to 482 residues: tRNA sulfurtransferase (482 aa).

A THUMP domain is found at 61-165; sequence LTIRDALTRI…DDRLLLIKGR (105 aa). ATP contacts are provided by residues 183–184, K265, G287, and Q296; that span reads LI. Residues C344 and C456 are joined by a disulfide bond. In terms of domain architecture, Rhodanese spans 404–482; sequence FGPNDVILDI…GFNNVKVYRP (79 aa). Residue C456 is the Cysteine persulfide intermediate of the active site.

It belongs to the ThiI family.

Its subcellular location is the cytoplasm. The enzyme catalyses [ThiI sulfur-carrier protein]-S-sulfanyl-L-cysteine + a uridine in tRNA + 2 reduced [2Fe-2S]-[ferredoxin] + ATP + H(+) = [ThiI sulfur-carrier protein]-L-cysteine + a 4-thiouridine in tRNA + 2 oxidized [2Fe-2S]-[ferredoxin] + AMP + diphosphate. It catalyses the reaction [ThiS sulfur-carrier protein]-C-terminal Gly-Gly-AMP + S-sulfanyl-L-cysteinyl-[cysteine desulfurase] + AH2 = [ThiS sulfur-carrier protein]-C-terminal-Gly-aminoethanethioate + L-cysteinyl-[cysteine desulfurase] + A + AMP + 2 H(+). It functions in the pathway cofactor biosynthesis; thiamine diphosphate biosynthesis. Its function is as follows. Catalyzes the ATP-dependent transfer of a sulfur to tRNA to produce 4-thiouridine in position 8 of tRNAs, which functions as a near-UV photosensor. Also catalyzes the transfer of sulfur to the sulfur carrier protein ThiS, forming ThiS-thiocarboxylate. This is a step in the synthesis of thiazole, in the thiamine biosynthesis pathway. The sulfur is donated as persulfide by IscS. The protein is tRNA sulfurtransferase of Shigella flexneri.